The chain runs to 184 residues: ATP-dependent protease subunit HslV (184 aa).

Thr12 is an active-site residue. The Na(+) site is built by Ala166, Cys169, and Thr172.

The protein belongs to the peptidase T1B family. HslV subfamily. A double ring-shaped homohexamer of HslV is capped on each side by a ring-shaped HslU homohexamer. The assembly of the HslU/HslV complex is dependent on binding of ATP.

It is found in the cytoplasm. It catalyses the reaction ATP-dependent cleavage of peptide bonds with broad specificity.. Allosterically activated by HslU binding. Functionally, protease subunit of a proteasome-like degradation complex believed to be a general protein degrading machinery. This chain is ATP-dependent protease subunit HslV, found in Brucella ovis (strain ATCC 25840 / 63/290 / NCTC 10512).